The chain runs to 401 residues: Argininosuccinate synthase (401 aa).

Residues 10 to 18 (AYSGGVDTS) and alanine 38 contribute to the ATP site. Tyrosine 89 contacts L-citrulline. Glycine 119 contacts ATP. 3 residues coordinate L-aspartate: threonine 121, asparagine 125, and aspartate 126. Asparagine 125 provides a ligand contact to L-citrulline. Arginine 129, serine 177, serine 186, glutamate 262, and tyrosine 274 together coordinate L-citrulline.

It belongs to the argininosuccinate synthase family. Type 1 subfamily. Homotetramer.

It localises to the cytoplasm. It carries out the reaction L-citrulline + L-aspartate + ATP = 2-(N(omega)-L-arginino)succinate + AMP + diphosphate + H(+). The protein operates within amino-acid biosynthesis; L-arginine biosynthesis; L-arginine from L-ornithine and carbamoyl phosphate: step 2/3. In Synechococcus sp. (strain WH7803), this protein is Argininosuccinate synthase.